Reading from the N-terminus, the 1148-residue chain is Phospholipid-transporting ATPase IB (1148 aa).

Residues 1–44 (MSRATSVGDQLEAPARIIYLNQSHLNKFCDNRISTAKYSVLTFL) lie on the Cytoplasmic side of the membrane. Thr5 carries the phosphothreonine modification. A helical membrane pass occupies residues 45 to 66 (PRFLYEQIRRAANAFFLFIALL). The Exoplasmic loop portion of the chain corresponds to 67-71 (QQIPD). Residues 72 to 94 (VSPTGRYTTLVPLVIILTIAGIK) form a helical membrane-spanning segment. The Cytoplasmic segment spans residues 95–276 (EIIEDFKRHK…SNVEKVTNVQ (182 aa)). A helical transmembrane segment spans residues 277-298 (ILVLFGILLVMALVSSVGALFW). Topologically, residues 299 to 323 (NGSHGGKSWYIKKMDTNSDNFGYNL) are exoplasmic loop. The helical transmembrane segment at 324–345 (LTFIILYNNLIPISLLVTLEVV) threads the bilayer. Residues 346–837 (KYTQALFINW…GAWSYNRVTK (492 aa)) lie on the Cytoplasmic side of the membrane. Asp388 functions as the 4-aspartylphosphate intermediate in the catalytic mechanism. Asp388, Lys389, Thr390, Glu488, Phe529, Lys552, Arg585, Thr665, Gly666, Asp667, Arg755, and Lys761 together coordinate ATP. Asp388 contributes to the Mg(2+) binding site. Residue Thr390 coordinates Mg(2+). Asp781 is a Mg(2+) binding site. Residues Asn784 and Asp785 each coordinate ATP. Asp785 serves as a coordination point for Mg(2+). A helical membrane pass occupies residues 838 to 858 (CILYCFYKNVVLYIIELWFAF). The Exoplasmic loop segment spans residues 859-870 (VNGFSGQILFER). The helical transmembrane segment at 871-890 (WCIGLYNVIFTALPPFTLGI) threads the bilayer. At 891–920 (FERSCTQESMLRFPQLYRITQNAEGFNTKV) the chain is on the cytoplasmic side. Residues 921 to 942 (FWGHCINALVHSLILFWVPMKA) form a helical membrane-spanning segment. Residues 943–956 (LEHDTPVTSGHATD) lie on the Exoplasmic loop side of the membrane. Residues 957 to 979 (YLFVGNIVYTYVVVTVCLKAGLE) traverse the membrane as a helical segment. The Cytoplasmic segment spans residues 980–985 (TTAWTK). The helical transmembrane segment at 986 to 1006 (FSHLAVWGSMLIWLVFFGVYS) threads the bilayer. Residues 1007–1024 (TIWPTIPIAPDMKGQATM) lie on the Exoplasmic loop side of the membrane. A helical transmembrane segment spans residues 1025 to 1049 (VLSSAYFWLGLFLVPTACLIEDVAW). Residues 1050 to 1148 (RAAKHTCKKT…DTTKENSRKK (99 aa)) lie on the Cytoplasmic side of the membrane.

Belongs to the cation transport ATPase (P-type) (TC 3.A.3) family. Type IV subfamily. As to quaternary structure, component of a P4-ATPase flippase complex which consists of a catalytic alpha subunit and an accessory beta subunit. Interacts with TMEM30A to form a flippase complex. The cofactor is Mg(2+). Found in testis, heart and brain. Most abundant in testis. Also detected in fetal tissues. Expressed in retinal photoreceptor cells; detected in retina outer nuclear layer and inner segment (at protein level).

It is found in the membrane. The protein localises to the golgi apparatus membrane. It localises to the endosome membrane. Its subcellular location is the cell membrane. The protein resides in the photoreceptor outer segment membrane. It is found in the photoreceptor inner segment membrane. The catalysed reaction is ATP + H2O + phospholipidSide 1 = ADP + phosphate + phospholipidSide 2.. It carries out the reaction a 1,2-diacyl-sn-glycero-3-phospho-L-serine(out) + ATP + H2O = a 1,2-diacyl-sn-glycero-3-phospho-L-serine(in) + ADP + phosphate + H(+). It catalyses the reaction a 1,2-diacyl-sn-glycero-3-phosphoethanolamine(in) + ATP + H2O = a 1,2-diacyl-sn-glycero-3-phosphoethanolamine(out) + ADP + phosphate + H(+). In terms of biological role, catalytic component of a P4-ATPase flippase complex which catalyzes the hydrolysis of ATP coupled to the transport of aminophospholipids from the outer to the inner leaflet of various membranes and ensures the maintenance of asymmetric distribution of phospholipids. Able to translocate phosphatidylserine, but not phosphatidylcholine. Phospholipid translocation also seems to be implicated in vesicle formation and in uptake of lipid signaling molecules. Reconstituted to liposomes, the ATP8A2:TMEM30A flippase complex predominantly transports phosphatidylserine (PS) and to a lesser extent phosphatidylethanolamine (PE). Phospholipid translocation is not associated with a countertransport of an inorganic ion or other charged substrate from the cytoplasmic side toward the exoplasm in connection with the phosphorylation from ATP. ATP8A2:TMEM30A may be involved in regulation of neurite outgrowth. Proposed to function in the generation and maintenance of phospholipid asymmetry in photoreceptor disk membranes and neuronal axon membranes. May be involved in vesicle trafficking in neuronal cells. Required for normal visual and auditory function; involved in photoreceptor and inner ear spiral ganglion cell survival. This chain is Phospholipid-transporting ATPase IB, found in Mus musculus (Mouse).